Reading from the N-terminus, the 462-residue chain is Elongation factor 1-alpha (462 aa).

G2 carries the post-translational modification N,N,N-trimethylglycine. K3 is modified (N6,N6-dimethyllysine; alternate). K3 carries the N6-methyllysine; alternate modification. The region spanning 5–242 (KAHVNVVVIG…DAIEPPVRPS (238 aa)) is the tr-type G domain. Residues 14 to 21 (GHVDSGKS) are G1. 14 to 21 (GHVDSGKS) provides a ligand contact to GTP. N6-methyllysine is present on K30. A G2 region spans residues 70 to 74 (GITID). The residue at position 79 (K79) is an N6,N6,N6-trimethyllysine. Residues 91–94 (DAPG) are G3. GTP is bound by residues 91–95 (DAPGH) and 153–156 (NKMD). Residues 153–156 (NKMD) are G4. Residues 192 to 194 (SGW) are G5. K318 bears the N6,N6-dimethyllysine; alternate mark. N6-methyllysine; alternate is present on K318. K392 carries the post-translational modification N6-methyllysine.

It belongs to the TRAFAC class translation factor GTPase superfamily. Classic translation factor GTPase family. EF-Tu/EF-1A subfamily.

Its subcellular location is the cytoplasm. In terms of biological role, this protein promotes the GTP-dependent binding of aminoacyl-tRNA to the A-site of ribosomes during protein biosynthesis. This chain is Elongation factor 1-alpha (TEF1), found in Serendipita indica (Root endophyte fungus).